The primary structure comprises 262 residues: Ninja-family protein 2 (262 aa).

The interval 49-70 is disordered; the sequence is RNSLACNTSKEAAGQSPKEMNA.

Belongs to the Ninja family.

The protein resides in the nucleus. The polypeptide is Ninja-family protein 2 (Zea mays (Maize)).